We begin with the raw amino-acid sequence, 91 residues long: Anther-specific protein RTS (91 aa).

An N-terminal signal peptide occupies residues 1 to 21 (MVRVGAAAAVLVLAAAAAAMA).

Required for tapetum and pollen development. The chain is Anther-specific protein RTS from Oryza sativa subsp. japonica (Rice).